The primary structure comprises 223 residues: uncharacterized protein (223 aa).

Positions 1-30 are disordered; that stretch reads MASATVRNVPLLDDDTIPFGEEDEMRDPSR. Over residues 12–25 the composition is skewed to acidic residues; that stretch reads LDDDTIPFGEEDEM. The next 4 membrane-spanning stretches (helical) occupy residues 35–55, 56–76, 129–149, and 154–174; these read YTHP…ILIY, MFCG…VLFL, IFWL…LFAL, and FKWL…LYGY.

The protein belongs to the TVP23 family.

The protein resides in the membrane. This is an uncharacterized protein from Drosophila melanogaster (Fruit fly).